A 492-amino-acid chain; its full sequence is Glutamyl-tRNA(Gln) amidotransferase subunit A (492 aa).

Residues Lys-79 and Ser-154 each act as charge relay system in the active site. Ser-178 acts as the Acyl-ester intermediate in catalysis.

This sequence belongs to the amidase family. GatA subfamily. In terms of assembly, heterotrimer of A, B and C subunits.

The catalysed reaction is L-glutamyl-tRNA(Gln) + L-glutamine + ATP + H2O = L-glutaminyl-tRNA(Gln) + L-glutamate + ADP + phosphate + H(+). Functionally, allows the formation of correctly charged Gln-tRNA(Gln) through the transamidation of misacylated Glu-tRNA(Gln) in organisms which lack glutaminyl-tRNA synthetase. The reaction takes place in the presence of glutamine and ATP through an activated gamma-phospho-Glu-tRNA(Gln). The polypeptide is Glutamyl-tRNA(Gln) amidotransferase subunit A (Acinetobacter baylyi (strain ATCC 33305 / BD413 / ADP1)).